Consider the following 162-residue polypeptide: Large ribosomal subunit protein bL17 (162 aa).

The interval 118-162 (RAPAAAPEAEEKGEKKAAGKAEKAPKAAKAPKAEKKPAKKAAKAE) is disordered. The segment covering 126 to 162 (AEEKGEKKAAGKAEKAPKAAKAPKAEKKPAKKAAKAE) has biased composition (basic and acidic residues).

This sequence belongs to the bacterial ribosomal protein bL17 family. In terms of assembly, part of the 50S ribosomal subunit. Contacts protein L32.

The chain is Large ribosomal subunit protein bL17 from Anaeromyxobacter dehalogenans (strain 2CP-C).